A 396-amino-acid chain; its full sequence is Proteasome-activating nucleotidase (396 aa).

Positions 16–57 (VTYLKRRIRQLELQVRMLEADKERLERELSRLRSEMSRLRQP) form a coiled coil. ATP is bound by residues 181–186 (GCGKTL) and His-320. Positions 394–396 (IYG) are docks into pockets in the proteasome alpha-ring to cause gate opening.

The protein belongs to the AAA ATPase family. In terms of assembly, homohexamer. The hexameric complex has a two-ring architecture resembling a top hat that caps the 20S proteasome core at one or both ends. Upon ATP-binding, the C-terminus of PAN interacts with the alpha-rings of the proteasome core by binding to the intersubunit pockets.

It localises to the cytoplasm. In terms of biological role, ATPase which is responsible for recognizing, binding, unfolding and translocation of substrate proteins into the archaeal 20S proteasome core particle. Is essential for opening the gate of the 20S proteasome via an interaction with its C-terminus, thereby allowing substrate entry and access to the site of proteolysis. Thus, the C-termini of the proteasomal ATPase function like a 'key in a lock' to induce gate opening and therefore regulate proteolysis. Unfolding activity requires energy from ATP hydrolysis, whereas ATP binding alone promotes ATPase-20S proteasome association which triggers gate opening, and supports translocation of unfolded substrates. The polypeptide is Proteasome-activating nucleotidase (Pyrococcus furiosus (strain ATCC 43587 / DSM 3638 / JCM 8422 / Vc1)).